The sequence spans 37 residues: Cytochrome b6-f complex subunit 5 (37 aa).

Residues 5–25 (LLSGIVLGLIPITLAGLFVTA) traverse the membrane as a helical segment.

This sequence belongs to the PetG family. In terms of assembly, the 4 large subunits of the cytochrome b6-f complex are cytochrome b6, subunit IV (17 kDa polypeptide, PetD), cytochrome f and the Rieske protein, while the 4 small subunits are PetG, PetL, PetM and PetN. The complex functions as a dimer.

It is found in the plastid. It localises to the chloroplast thylakoid membrane. Component of the cytochrome b6-f complex, which mediates electron transfer between photosystem II (PSII) and photosystem I (PSI), cyclic electron flow around PSI, and state transitions. PetG is required for either the stability or assembly of the cytochrome b6-f complex. The protein is Cytochrome b6-f complex subunit 5 of Angiopteris evecta (Mule's foot fern).